The sequence spans 209 residues: Uridine kinase (209 aa).

12-19 (GGSGSGKT) is an ATP binding site.

It belongs to the uridine kinase family.

Its subcellular location is the cytoplasm. The catalysed reaction is uridine + ATP = UMP + ADP + H(+). It carries out the reaction cytidine + ATP = CMP + ADP + H(+). It functions in the pathway pyrimidine metabolism; CTP biosynthesis via salvage pathway; CTP from cytidine: step 1/3. The protein operates within pyrimidine metabolism; UMP biosynthesis via salvage pathway; UMP from uridine: step 1/1. The sequence is that of Uridine kinase from Listeria innocua serovar 6a (strain ATCC BAA-680 / CLIP 11262).